The following is a 563-amino-acid chain: CDKN2A-interacting protein (563 aa).

Ala-2 bears the N-acetylalanine mark. The region spanning 19–126 is the XRN2-binding (XTBD) domain; that stretch reads VETLRCEGET…KVKKRGISSS (108 aa). Disordered regions lie at residues 122–289 and 304–351; these read GISS…LLGS and SSSE…PSLL. At Ser-124 the chain carries Phosphoserine. Over residues 147 to 160 the composition is skewed to basic and acidic residues; the sequence is VERDHGKKSAKTDR. Composition is skewed to low complexity over residues 168–216 and 234–248; these read SSPS…SSQV and SASF…SMNS. Residue Lys-177 forms a Glycyl lysine isopeptide (Lys-Gly) (interchain with G-Cter in SUMO1) linkage. Ser-234 is subject to Phosphoserine. Positions 249 to 262 are enriched in polar residues; sequence HMTQSTDNRQQSGS. Residues 270–280 show a composition bias toward low complexity; it reads GSSGSASQSSS. Residue Thr-340 is modified to Phosphothreonine. Ser-371 bears the Phosphoserine mark. Positions 445-520 constitute a DRBM domain; sequence NHGELLNAAI…SREALKLFLK (76 aa).

It belongs to the CARF family. As to quaternary structure, interacts with CDKN2A/p14ARF, p53/TP53 and MDM2. Interacts with CHEK2 and MAPK3. Interacts with XRN2. In terms of processing, may be ubiquitinated.

It is found in the nucleus. Its subcellular location is the nucleoplasm. Functionally, regulates DNA damage response and cell proliferation in a dose-dependent manner through a number of signaling pathways involved in cell proliferation, apoptosis and senescence. This Mus musculus (Mouse) protein is CDKN2A-interacting protein (Cdkn2aip).